A 481-amino-acid polypeptide reads, in one-letter code: Ribosomal protein uS12 methylthiotransferase RimO (481 aa).

Residues asparagine 38–proline 148 form the MTTase N-terminal domain. 6 residues coordinate [4Fe-4S] cluster: cysteine 47, cysteine 83, cysteine 112, cysteine 180, cysteine 184, and cysteine 187. A Radical SAM core domain is found at leucine 166–glutamate 403. A TRAM domain is found at alanine 406 to aspartate 472.

The protein belongs to the methylthiotransferase family. RimO subfamily. [4Fe-4S] cluster serves as cofactor.

It localises to the cytoplasm. The enzyme catalyses L-aspartate(89)-[ribosomal protein uS12]-hydrogen + (sulfur carrier)-SH + AH2 + 2 S-adenosyl-L-methionine = 3-methylsulfanyl-L-aspartate(89)-[ribosomal protein uS12]-hydrogen + (sulfur carrier)-H + 5'-deoxyadenosine + L-methionine + A + S-adenosyl-L-homocysteine + 2 H(+). Catalyzes the methylthiolation of an aspartic acid residue of ribosomal protein uS12. This Shewanella oneidensis (strain ATCC 700550 / JCM 31522 / CIP 106686 / LMG 19005 / NCIMB 14063 / MR-1) protein is Ribosomal protein uS12 methylthiotransferase RimO.